Consider the following 811-residue polypeptide: Ent-13-epi-manoyl oxide synthase KSL2, chloroplastic (811 aa).

A chloroplast-targeting transit peptide spans 1–49 (MALPLSTCLLFHPKESRSRRFCFSPASAASLKSGLHSATSAKIASMPTC). Residues Asp550, Asp554, Asn694, and Glu702 each coordinate Mg(2+). The DDXXD motif signature appears at 550–554 (DDFFD).

This sequence belongs to the terpene synthase family. The cofactor is Mg(2+).

The protein resides in the plastid. It localises to the chloroplast. It catalyses the reaction ent-8alpha-hydroxylabd-13-en-15-yl diphosphate = ent-13-epi-manoyl oxide + diphosphate. It functions in the pathway secondary metabolite biosynthesis; terpenoid biosynthesis. Involved in diterpenoid biosynthesis. Catalyzes the conversion of ent-8alpha-hydroxylabd-13-en-15-yl diphosphate to ent-13-epi-manoyl oxide. This Salvia miltiorrhiza (Chinese sage) protein is Ent-13-epi-manoyl oxide synthase KSL2, chloroplastic.